The primary structure comprises 809 residues: MSSQLVQFSTVPQIPNPPSRHRHFLSERNYIPANVYEHPAALLLERCSSLKELRQILPLVFKNGLYQEHFFQTKLVSLFCRYGSVDEAARVFEPIDSKLNVLYHTMLKGFAKVSDLDKALQFFVRMRYDDVEPVVYNFTYLLKVCGDEAELRVGKEIHGLLVKSGFSLDLFAMTGLENMYAKCRQVNEARKVFDRMPERDLVSWNTIVAGYSQNGMARMALEMVKSMCEENLKPSFITIVSVLPAVSALRLISVGKEIHGYAMRSGFDSLVNISTALVDMYAKCGSLETARQLFDGMLERNVVSWNSMIDAYVQNENPKEAMLIFQKMLDEGVKPTDVSVMGALHACADLGDLERGRFIHKLSVELGLDRNVSVVNSLISMYCKCKEVDTAASMFGKLQSRTLVSWNAMILGFAQNGRPIDALNYFSQMRSRTVKPDTFTYVSVITAIAELSITHHAKWIHGVVMRSCLDKNVFVTTALVDMYAKCGAIMIARLIFDMMSERHVTTWNAMIDGYGTHGFGKAALELFEEMQKGTIKPNGVTFLSVISACSHSGLVEAGLKCFYMMKENYSIELSMDHYGAMVDLLGRAGRLNEAWDFIMQMPVKPAVNVYGAMLGACQIHKNVNFAEKAAERLFELNPDDGGYHVLLANIYRAASMWEKVGQVRVSMLRQGLRKTPGCSMVEIKNEVHSFFSGSTAHPDSKKIYAFLEKLICHIKEAGYVPDTNLVLGVENDVKEQLLSTHSEKLAISFGLLNTTAGTTIHVRKNLRVCADCHNATKYISLVTGREIVVRDMQRFHHFKNGACSCGDYW.

The transit peptide at 1–46 (MSSQLVQFSTVPQIPNPPSRHRHFLSERNYIPANVYEHPAALLLER) directs the protein to the chloroplast. 16 PPR repeats span residues 68–98 (EHFF…IDSK), 99–133 (LNVL…DVEP), 134–168 (VVYN…GFSL), 169–199 (DLFA…MPER), 200–234 (DLVS…NLKP), 235–269 (SFIT…GFDS), 270–300 (LVNI…MLER), 301–335 (NVVS…GVKP), 336–370 (TDVS…GLDR), 371–401 (NVSV…LQSR), 402–436 (TLVS…TVKP), 437–471 (DTFT…CLDK), 472–502 (NVFV…MSER), 503–537 (HVTT…TIKP), 538–568 (NGVT…MKEN), and 574–604 (SMDH…MPVK). The type E motif stretch occupies residues 609 to 684 (VYGAMLGACQ…TPGCSMVEIK (76 aa)). The interval 685 to 715 (NEVHSFFSGSTAHPDSKKIYAFLEKLICHIK) is type E(+) motif. Positions 716-809 (EAGYVPDTNL…NGACSCGDYW (94 aa)) are type DYW motif.

This sequence belongs to the PPR family. PCMP-H subfamily.

The protein resides in the plastid. Its subcellular location is the chloroplast. Involved in multiple sites RNA editing events in chloroplasts. Involved in the editing of the site 7 of ndhB (ndhB-7) and site 5 of ndhD (ndhD-5) transcripts, which are two plastid-encoded subunits of the chloroplast NAD(P)H dehydrogenase (NDH) complex. Involved in the editing of the site 3 of rpoB (rpoB-3) transcript. Required for the activity of the NDH complex of the photosynthetic electron transport chain. Possesses low endoribonuclease activity in vitro. The polypeptide is Pentatricopeptide repeat-containing protein At1g11290, chloroplastic (PCMP-H40) (Arabidopsis thaliana (Mouse-ear cress)).